Here is a 79-residue protein sequence, read N- to C-terminus: DNA-directed RNA polymerase subunit omega (79 aa).

It belongs to the RNA polymerase subunit omega family. As to quaternary structure, the RNAP catalytic core consists of 2 alpha, 1 beta, 1 beta' and 1 omega subunit. When a sigma factor is associated with the core the holoenzyme is formed, which can initiate transcription.

It catalyses the reaction RNA(n) + a ribonucleoside 5'-triphosphate = RNA(n+1) + diphosphate. Functionally, promotes RNA polymerase assembly. Latches the N- and C-terminal regions of the beta' subunit thereby facilitating its interaction with the beta and alpha subunits. This chain is DNA-directed RNA polymerase subunit omega (rpoZ), found in Thermotoga maritima (strain ATCC 43589 / DSM 3109 / JCM 10099 / NBRC 100826 / MSB8).